The chain runs to 243 residues: Terpene cyclase nodB (243 aa).

3 helical membrane passes run Ile19–Ile39, Met50–Pro70, and Ile75–Ile95. N-linked (GlcNAc...) asparagine glycosylation is present at Asn111. 4 helical membrane-spanning segments follow: residues Ile112–Ala132, Ile134–Gly154, Ser169–Leu189, and Leu205–Trp225.

It belongs to the paxB family.

It is found in the membrane. It functions in the pathway secondary metabolite biosynthesis. Functionally, terpene cyclase; part of the gene cluster that mediates the biosynthesis of the indole diterpenes nodulisporic acids (NA). Nodulisporic acid A (NAA) and its chemically modified derivatives are of particular significance because of their highly potent insecticidal activity against blood-feeding arthropods and lack of observable adverse effects on mammals, in particular the tremogenicity associated with the paspaline-derived IDTs is not observed. The geranylgeranyl diphosphate (GGPP) synthase ggs1, localized outside of the cluster, is proposed to catalyze the first step in nodulisporic acid biosynthesis via conversion of farnesyl pyrophosphate and isopentyl pyrophosphate into geranylgeranyl pyrophosphate (GGPP). Condensation of indole-3-glycerol phosphate with GGPP by the prenyl transferase nodC then forms 3-geranylgeranylindole (3-GGI). Epoxidation by the FAD-dependent monooxygenase nodM leads to a single-epoxidized-GGI that is substrate of the terpene cyclase nodB for cyclization to yield emindole SB. The terminal methyl carbon, C28, of emindole SB is then oxidized by the cytochrome P450 monooxygenase nodW to produce nodulisporic acid F (NAF), the pentacyclic core of NAA. NAF is converted to nodulisporic acid E (NAE) via prenylation. This step is probably performed by one of the indole diterpene prenyltransferases nodD1 or nodD2. Several oxidation steps performed by the FAD-linked oxidoreductase nodO and one of the cytochrome P450 monooxygenase nodR, nodX or nodZ further convert NAE to nodulisporic acid D (NAD). NAD is substrate of cytochrome P450 monooxygenase nodJ to produce the precursor of nodulisporic acid C (NAC), converted to NAC by one of the indole diterpene prenyltransferases nodD1 or nodD2. The FAD-dependent monooxygenase nodY2 then oxidizes NAC to nodulisporic acid B (NAB). Finally NAB is converted to NAA by one of the cytochrome P450 monooxygenases nodR, nodX or nodZ. This is Terpene cyclase nodB from Hypoxylon pulicicidum.